A 383-amino-acid polypeptide reads, in one-letter code: Putative F-box protein At1g77650 (383 aa).

Positions 1 to 47 (MAFLSLPSDVVEEFLFKTPIESLVLCKPTCKQLYALCNDKRFIYNHL) constitute an F-box domain.

The protein is Putative F-box protein At1g77650 of Arabidopsis thaliana (Mouse-ear cress).